Here is a 128-residue protein sequence, read N- to C-terminus: Protein C10 (128 aa).

Belongs to the UPF0456 family.

The protein localises to the cytoplasm. In Xenopus laevis (African clawed frog), this protein is Protein C10.